The sequence spans 344 residues: tRNA N6-adenosine threonylcarbamoyltransferase (344 aa).

His111 and His115 together coordinate Fe cation. Substrate contacts are provided by residues 134–138 (LVSGG), Asp167, Gly180, and Asn273. Position 301 (Asp301) interacts with Fe cation.

This sequence belongs to the KAE1 / TsaD family. The cofactor is Fe(2+).

The protein resides in the cytoplasm. It catalyses the reaction L-threonylcarbamoyladenylate + adenosine(37) in tRNA = N(6)-L-threonylcarbamoyladenosine(37) in tRNA + AMP + H(+). Functionally, required for the formation of a threonylcarbamoyl group on adenosine at position 37 (t(6)A37) in tRNAs that read codons beginning with adenine. Is involved in the transfer of the threonylcarbamoyl moiety of threonylcarbamoyl-AMP (TC-AMP) to the N6 group of A37, together with TsaE and TsaB. TsaD likely plays a direct catalytic role in this reaction. In Cupriavidus taiwanensis (strain DSM 17343 / BCRC 17206 / CCUG 44338 / CIP 107171 / LMG 19424 / R1) (Ralstonia taiwanensis (strain LMG 19424)), this protein is tRNA N6-adenosine threonylcarbamoyltransferase.